Consider the following 254-residue polypeptide: tRNA pseudouridine synthase A (254 aa).

The Nucleophile role is filled by Asp52. Tyr111 lines the substrate pocket.

This sequence belongs to the tRNA pseudouridine synthase TruA family. As to quaternary structure, homodimer.

It catalyses the reaction uridine(38/39/40) in tRNA = pseudouridine(38/39/40) in tRNA. Its function is as follows. Formation of pseudouridine at positions 38, 39 and 40 in the anticodon stem and loop of transfer RNAs. The protein is tRNA pseudouridine synthase A of Rhizorhabdus wittichii (strain DSM 6014 / CCUG 31198 / JCM 15750 / NBRC 105917 / EY 4224 / RW1) (Sphingomonas wittichii).